A 451-amino-acid polypeptide reads, in one-letter code: Tubulin alpha-2 chain (451 aa).

Gln-11 lines the GTP pocket. Lys-40 is modified (N6-acetyllysine). The GTP site is built by Glu-71, Ser-140, Gly-144, Thr-145, Thr-179, Asn-206, and Asn-228. Residue Glu-71 participates in Mg(2+) binding. Glu-254 is a catalytic residue. Residues 432-451 (YEEVGIDTADGEDDEEANDY) form a disordered region.

This sequence belongs to the tubulin family. Dimer of alpha and beta chains. A typical microtubule is a hollow water-filled tube with an outer diameter of 25 nm and an inner diameter of 15 nM. Alpha-beta heterodimers associate head-to-tail to form protofilaments running lengthwise along the microtubule wall with the beta-tubulin subunit facing the microtubule plus end conferring a structural polarity. Microtubules usually have 13 protofilaments but different protofilament numbers can be found in some organisms and specialized cells. Mg(2+) is required as a cofactor. Undergoes a tyrosination/detyrosination cycle, the cyclic removal and re-addition of a C-terminal tyrosine residue by the enzymes tubulin tyrosine carboxypeptidase (TTCP) and tubulin tyrosine ligase (TTL), respectively. Post-translationally, acetylation of alpha chains at Lys-40 stabilizes microtubules and affects affinity and processivity of microtubule motors. This modification has a role in multiple cellular functions, ranging from cell motility, cell cycle progression or cell differentiation to intracellular trafficking and signaling.

The protein localises to the cytoplasm. It localises to the cytoskeleton. The enzyme catalyses GTP + H2O = GDP + phosphate + H(+). In terms of biological role, tubulin is the major constituent of microtubules, a cylinder consisting of laterally associated linear protofilaments composed of alpha- and beta-tubulin heterodimers. Microtubules grow by the addition of GTP-tubulin dimers to the microtubule end, where a stabilizing cap forms. Below the cap, tubulin dimers are in GDP-bound state, owing to GTPase activity of alpha-tubulin. The sequence is that of Tubulin alpha-2 chain from Homarus americanus (American lobster).